Consider the following 192-residue polypeptide: Ion-translocating oxidoreductase complex subunit A (192 aa).

The next 6 membrane-spanning stretches (helical) occupy residues 5-25, 39-59, 72-92, 102-122, 134-154, and 171-191; these read LLLLIGTVLVNNFVLVKFLGL, IGMSMATTFVLTLASVLSFLV, LRTMSFILVIAVVVQFTEMLV, ALGIYLPLITTNCAVLGVALL, AIYGFGAAVGFSLVLILFSAM, and AIAMITAGLMSLAFMGFTGLV.

It belongs to the NqrDE/RnfAE family. The complex is composed of six subunits: RnfA, RnfB, RnfC, RnfD, RnfE and RnfG.

It is found in the cell inner membrane. Functionally, part of a membrane-bound complex that couples electron transfer with translocation of ions across the membrane. In Shewanella amazonensis (strain ATCC BAA-1098 / SB2B), this protein is Ion-translocating oxidoreductase complex subunit A.